Here is a 328-residue protein sequence, read N- to C-terminus: MKIYYENDIDMEILADKKIAVIGYGSQGEAQARNMADSGLNVIVGLRRGGSSWKKAHDDGMNVMTIEDASREADIIHILIPDEIQETVFEQSIRPYLKEGNTISFSHGYNIHYGYIKAPEGVNVTMVAPKGPGAMVRRTYLEGFGIPGLVAVEVDATGDAMEQALAMAKACGLARAGVLETTFREETETDLFGEQAVLCGGVTELINTAFKTLVRAGYQPEIAYFETCHELKLIVDLIYERGFRGMWHNVSNTAEFGGLTRRGRIITEETEKEMDEILKEIQNGKFAKEWALENRAGAPMLKRMRKLESELEIEEVGSKLRKLCGLEK.

Positions Met-1–Thr-181 constitute a KARI N-terminal Rossmann domain. Residues Tyr-24 to Gln-27, Arg-47, Ser-52, and Asp-82 to Gln-85 each bind NADP(+). Residue His-107 is part of the active site. An NADP(+)-binding site is contributed by Gly-133. The KARI C-terminal knotted domain maps to Thr-182 to Glu-327. Residues Asp-190, Glu-194, Glu-226, and Glu-230 each coordinate Mg(2+). Ser-251 contacts substrate.

Belongs to the ketol-acid reductoisomerase family. The cofactor is Mg(2+).

The enzyme catalyses (2R)-2,3-dihydroxy-3-methylbutanoate + NADP(+) = (2S)-2-acetolactate + NADPH + H(+). It carries out the reaction (2R,3R)-2,3-dihydroxy-3-methylpentanoate + NADP(+) = (S)-2-ethyl-2-hydroxy-3-oxobutanoate + NADPH + H(+). Its pathway is amino-acid biosynthesis; L-isoleucine biosynthesis; L-isoleucine from 2-oxobutanoate: step 2/4. The protein operates within amino-acid biosynthesis; L-valine biosynthesis; L-valine from pyruvate: step 2/4. Involved in the biosynthesis of branched-chain amino acids (BCAA). Catalyzes an alkyl-migration followed by a ketol-acid reduction of (S)-2-acetolactate (S2AL) to yield (R)-2,3-dihydroxy-isovalerate. In the isomerase reaction, S2AL is rearranged via a Mg-dependent methyl migration to produce 3-hydroxy-3-methyl-2-ketobutyrate (HMKB). In the reductase reaction, this 2-ketoacid undergoes a metal-dependent reduction by NADPH to yield (R)-2,3-dihydroxy-isovalerate. The sequence is that of Ketol-acid reductoisomerase (NADP(+)) from Methanothermobacter thermautotrophicus (strain ATCC 29096 / DSM 1053 / JCM 10044 / NBRC 100330 / Delta H) (Methanobacterium thermoautotrophicum).